Reading from the N-terminus, the 298-residue chain is MWCPSVSLSVWANAWLAGKAAPDDLLDALSLWTPMQSVAAYDAVAAGHTGLPWPDIHDAGTVSLLQTLRTAVGRPTKSTPNDPHRLRGTINVVLPVPGDVHGLVTGTQFEHDALAASEAVIITNPHDSSTAVGLVPEYSYSNPEQYTNSEETRLSELSALSWVVYSLPGVPLFDHHELGDAEYALRSAVRSAADALGTIELNSATADITDPRGLVEQLLESSRQHRVPDHAPSRALRVLENAAHVDAIISVSTGLTPIGTHSLSDIEIASNALRPLTAVVRSARMAAVNAILHSAWPD.

The protein to M.tuberculosis Rv1486c, M.bovis Mb1522c and M.avium MAV321.

This is an uncharacterized protein from Mycobacterium leprae (strain TN).